Consider the following 194-residue polypeptide: ATP-dependent Clp protease proteolytic subunit (194 aa).

S98 serves as the catalytic Nucleophile. H123 is an active-site residue.

Belongs to the peptidase S14 family. Fourteen ClpP subunits assemble into 2 heptameric rings which stack back to back to give a disk-like structure with a central cavity, resembling the structure of eukaryotic proteasomes.

The protein localises to the cytoplasm. The enzyme catalyses Hydrolysis of proteins to small peptides in the presence of ATP and magnesium. alpha-casein is the usual test substrate. In the absence of ATP, only oligopeptides shorter than five residues are hydrolyzed (such as succinyl-Leu-Tyr-|-NHMec, and Leu-Tyr-Leu-|-Tyr-Trp, in which cleavage of the -Tyr-|-Leu- and -Tyr-|-Trp bonds also occurs).. Cleaves peptides in various proteins in a process that requires ATP hydrolysis. Has a chymotrypsin-like activity. Plays a major role in the degradation of misfolded proteins. This is ATP-dependent Clp protease proteolytic subunit from Acetivibrio thermocellus (strain ATCC 27405 / DSM 1237 / JCM 9322 / NBRC 103400 / NCIMB 10682 / NRRL B-4536 / VPI 7372) (Clostridium thermocellum).